Reading from the N-terminus, the 4218-residue chain is Protein Obscurin (4218 aa).

The SH3 domain maps to 3-71; sequence AVADIVFVSR…PIDILEFNPT (69 aa). A DH domain is found at 86–264; the sequence is RKLTILRELV…LSVPSRAYDN (179 aa). Residues 439–466 adopt a coiled-coil conformation; it reads SKETKERLQHEQQELLKLEQEAIELYKK. Disordered stretches follow at residues 465–592, 684–703, 728–750, and 923–1010; these read KKQQ…SHSK, SLRD…QQGY, SGAN…NFTR, and RYET…EDRP. Composition is skewed to low complexity over residues 466-490 and 505-517; these read KQQS…VKSS and AQVK…KVVS. Residues 578–592 show a composition bias toward basic and acidic residues; the sequence is KEVRKEVPPSASHSK. The span at 923–935 shows a compositional bias: basic and acidic residues; that stretch reads RYETKTRDYDRGT. Positions 936–948 are enriched in polar residues; it reads SYDSTVERSQYGI. Basic and acidic residues-rich tracts occupy residues 950 to 962 and 972 to 986; these read SRRD…KVEA and TESR…RAES. A compositionally biased stretch (low complexity) spans 987 to 996; that stretch reads RASYSVAESR. Ig-like C2-type domains follow at residues 1017–1103, 1152–1298, 1313–1400, 1504–1594, 1599–1689, 1694–1785, 1815–1906, 2018–2107, 2113–2214, 2220–2305, 2318–2409, 2415–2505, 2519–2609, 2614–2698, and 2716–2792; these read PVVV…TTVS, PRVK…AELS, PTLV…SSIN, PVIV…TQLL, PEFT…CVVT, PKVK…CKVA, PEIV…LSLS, PEIS…FNLA, PTFI…FKLA, PSFV…EKVA, PKFL…VEIV, PVFV…AKLY, PQFV…ANVR, PPVF…KDIT, and PPVF…SCRI. An intrachain disulfide couples Cys-1199 to Cys-1282. A disulfide bond links Cys-2739 and Cys-2790. The region spanning 2832 to 2933 is the Fibronectin type-III 1 domain; the sequence is APPPLSEGPI…TYRQKLVPDP (102 aa). Positions 3186-3440 constitute a Protein kinase 1 domain; that stretch reads YDIGDELGRG…VKTALKHPWF (255 aa). ATP is bound by residues Gly-3198, Lys-3215, Glu-3260, Ala-3262, Glu-3266, Lys-3310, and Asp-3326. Positions 3654 to 3738 constitute an Ig-like C2-type 16 domain; sequence PFFREKPQTI…ARNKVGQTVA (85 aa). In terms of domain architecture, Fibronectin type-III 2 spans 3750–3843; it reads APDSPEISAN…IPVSASTVGG (94 aa). In terms of domain architecture, Protein kinase 2 spans 3897 to 4151; sequence YSFISEIARG…TEDCLEHRWL (255 aa).

The protein belongs to the protein kinase superfamily. CAMK Ser/Thr protein kinase family. Interacts with myosin. May interact (via protein kinase domain 1) with ball. May interact (via protein kinase domain 1 or 2) with mask. May interact (via protein kinase domain 2) with Tm1/tropomyosin-1. In terms of tissue distribution, expressed in the thoracic muscles including the indirect flight muscles (IFM) (at protein level).

Its subcellular location is the cytoplasm. The protein localises to the myofibril. It is found in the sarcomere. The protein resides in the m line. In terms of biological role, structural component of the muscle M line which is involved in assembly and organization of sarcomere. Required for the development and organization of indirect flight muscle sarcomeres by regulating the formation of M line and H zone and the correct assembly of thick and thin filaments in the sarcomere. Lacks serine/threonine-protein kinase activity. This chain is Protein Obscurin, found in Drosophila melanogaster (Fruit fly).